Consider the following 261-residue polypeptide: Glucosamine-6-phosphate deaminase (261 aa).

Asp-67 acts as the Proton acceptor; for enolization step in catalysis. Residue Asp-136 is the For ring-opening step of the active site. Catalysis depends on His-138, which acts as the Proton acceptor; for ring-opening step. Glu-143 (for ring-opening step) is an active-site residue.

It belongs to the glucosamine/galactosamine-6-phosphate isomerase family. NagB subfamily.

The enzyme catalyses alpha-D-glucosamine 6-phosphate + H2O = beta-D-fructose 6-phosphate + NH4(+). Its pathway is amino-sugar metabolism; N-acetylneuraminate degradation; D-fructose 6-phosphate from N-acetylneuraminate: step 5/5. Functionally, catalyzes the reversible isomerization-deamination of glucosamine 6-phosphate (GlcN6P) to form fructose 6-phosphate (Fru6P) and ammonium ion. This Streptomyces avermitilis (strain ATCC 31267 / DSM 46492 / JCM 5070 / NBRC 14893 / NCIMB 12804 / NRRL 8165 / MA-4680) protein is Glucosamine-6-phosphate deaminase.